The chain runs to 498 residues: Dynein regulatory complex subunit 5 (498 aa).

2 disordered regions span residues 27–52 and 200–223; these read ALGS…LKTK and MPTP…EPEK. The segment covering 28–47 has biased composition (low complexity); sequence LGSSSTGPTSLKTSSTPTPG. LRR repeat units lie at residues 276-299, 306-327, 333-353, 361-382, 389-409, and 417-438; these read CHTL…ILIR, ALEE…AAAK, RLRV…QSLA, NLVF…AIAH, CLSV…TLLS, and TLVS…QLLE.

This sequence belongs to the DRC5 family. In terms of assembly, component of the nexin-dynein regulatory complex (N-DRC). Interacts with DRC1. Interacts with FBXL13/DRC6, DRC3 and DRC7. In terms of tissue distribution, testis-specific (at protein level).

It is found in the cell projection. The protein localises to the cilium. The protein resides in the flagellum. Its subcellular location is the cytoplasm. It localises to the cytoskeleton. It is found in the flagellum axoneme. Component of the nexin-dynein regulatory complex (N-DRC) a key regulator of ciliary/flagellar motility which maintains the alignment and integrity of the distal axoneme and regulates microtubule sliding in motile axonemes. May play a role in the assembly of N-DRC. Required for sperm motility. In Mus musculus (Mouse), this protein is Dynein regulatory complex subunit 5 (Tcte1).